Reading from the N-terminus, the 308-residue chain is Bifunctional protein FolD (308 aa).

170 to 172 (GKG) is an NADP(+) binding site.

This sequence belongs to the tetrahydrofolate dehydrogenase/cyclohydrolase family. In terms of assembly, homodimer.

It catalyses the reaction (6R)-5,10-methylene-5,6,7,8-tetrahydrofolate + NADP(+) = (6R)-5,10-methenyltetrahydrofolate + NADPH. It carries out the reaction (6R)-5,10-methenyltetrahydrofolate + H2O = (6R)-10-formyltetrahydrofolate + H(+). It functions in the pathway one-carbon metabolism; tetrahydrofolate interconversion. Its function is as follows. Catalyzes the oxidation of 5,10-methylenetetrahydrofolate to 5,10-methenyltetrahydrofolate and then the hydrolysis of 5,10-methenyltetrahydrofolate to 10-formyltetrahydrofolate. The protein is Bifunctional protein FolD of Pyrobaculum calidifontis (strain DSM 21063 / JCM 11548 / VA1).